The primary structure comprises 60 residues: Short neurotoxin C (60 aa).

4 cysteine pairs are disulfide-bonded: C3/C22, C17/C39, C41/C52, and C53/C58.

Belongs to the three-finger toxin family. Short-chain subfamily. Type I alpha-neurotoxin sub-subfamily. In terms of tissue distribution, expressed by the venom gland.

The protein resides in the secreted. Its function is as follows. Binds to muscle nicotinic acetylcholine receptor (nAChR) and inhibit acetylcholine from binding to the receptor, thereby impairing neuromuscular transmission. This chain is Short neurotoxin C, found in Aipysurus laevis (Olive sea snake).